Reading from the N-terminus, the 162-residue chain is Cyclic pyranopterin monophosphate synthase (162 aa).

Substrate is bound by residues 75-77 (MCH) and 116-117 (ME). The active site involves Asp-131.

It belongs to the MoaC family. As to quaternary structure, homohexamer; trimer of dimers.

It carries out the reaction (8S)-3',8-cyclo-7,8-dihydroguanosine 5'-triphosphate = cyclic pyranopterin phosphate + diphosphate. It participates in cofactor biosynthesis; molybdopterin biosynthesis. Catalyzes the conversion of (8S)-3',8-cyclo-7,8-dihydroguanosine 5'-triphosphate to cyclic pyranopterin monophosphate (cPMP). This Staphylococcus epidermidis (strain ATCC 35984 / DSM 28319 / BCRC 17069 / CCUG 31568 / BM 3577 / RP62A) protein is Cyclic pyranopterin monophosphate synthase.